A 100-amino-acid chain; its full sequence is Small ribosomal subunit protein uS14c (100 aa).

It belongs to the universal ribosomal protein uS14 family. Part of the 30S ribosomal subunit.

It localises to the plastid. The protein localises to the chloroplast. In terms of biological role, binds 16S rRNA, required for the assembly of 30S particles. In Morus indica (Mulberry), this protein is Small ribosomal subunit protein uS14c.